Reading from the N-terminus, the 1183-residue chain is Spermatogenesis-associated protein 31G1 (1183 aa).

Disordered stretches follow at residues 109-153 (TPIG…FPTF), 469-555 (LMPA…SPWA), 661-686 (TVDD…SSEP), 843-884 (ASQG…VSEV), 973-1032 (CLHS…TGLL), and 1048-1087 (QKRG…PAEA). Over residues 124–134 (CRSEGRPRATE) the composition is skewed to basic and acidic residues. Residues 135–153 (TQEQVLIQSPSPSRSFPTF) show a composition bias toward polar residues. The span at 487-509 (NPKERLSAPKDVRENLGYREHPH) shows a compositional bias: basic and acidic residues. Polar residues predominate over residues 671–685 (TGKNTDNTKKCSSSE). Pro residues predominate over residues 847 to 858 (PNPPAVNPPQPT). A compositionally biased stretch (polar residues) spans 975–984 (HSSSQPQAQA). Residues 993-1002 (QKSKRLKRKA) are compositionally biased toward basic residues. The span at 1069–1079 (SPTNTRENNPA) shows a compositional bias: polar residues.

Expressed in kidney and testis. Expressed at lower levels in stomach, intestine, epididymis and ovary. Expressed at very low levels in heart and spleen.

Its function is as follows. Dispensable for normal development and fertility. This chain is Spermatogenesis-associated protein 31G1 (Spata31g1), found in Mus musculus (Mouse).